The sequence spans 499 residues: Glycerol kinase (499 aa).

Thr12 lines the ADP pocket. 3 residues coordinate ATP: Thr12, Thr13, and Ser14. Residue Thr12 coordinates sn-glycerol 3-phosphate. Residue Arg16 coordinates ADP. 4 residues coordinate sn-glycerol 3-phosphate: Arg82, Glu83, Tyr135, and Asp245. Glycerol is bound by residues Arg82, Glu83, Tyr135, Asp245, and Gln246. The ADP site is built by Thr267 and Gly310. Thr267, Gly310, Gln314, and Gly411 together coordinate ATP. ADP contacts are provided by Gly411 and Asn415.

It belongs to the FGGY kinase family. In terms of assembly, homotetramer and homodimer (in equilibrium).

It carries out the reaction glycerol + ATP = sn-glycerol 3-phosphate + ADP + H(+). It participates in polyol metabolism; glycerol degradation via glycerol kinase pathway; sn-glycerol 3-phosphate from glycerol: step 1/1. Its activity is regulated as follows. Activated by phosphorylation and inhibited by fructose 1,6-bisphosphate (FBP). Functionally, key enzyme in the regulation of glycerol uptake and metabolism. Catalyzes the phosphorylation of glycerol to yield sn-glycerol 3-phosphate. In Clostridium beijerinckii (strain ATCC 51743 / NCIMB 8052) (Clostridium acetobutylicum), this protein is Glycerol kinase.